A 542-amino-acid polypeptide reads, in one-letter code: CTP synthase (542 aa).

The tract at residues 1–264 is amidoligase domain; the sequence is MKFIFITGGV…AKLIINKLKL (264 aa). Serine 12 contacts CTP. Serine 12 serves as a coordination point for UTP. 13-18 serves as a coordination point for ATP; it reads SLGKGI. Residue tyrosine 53 participates in L-glutamine binding. Aspartate 70 serves as a coordination point for ATP. 2 residues coordinate Mg(2+): aspartate 70 and glutamate 138. Residues 145–147, 185–190, and lysine 221 each bind CTP; these read DIE and KTKPTQ. Residues 185 to 190 and lysine 221 contribute to the UTP site; that span reads KTKPTQ. An ATP-binding site is contributed by 237-239; the sequence is KDA. The 244-residue stretch at 298–541 folds into the Glutamine amidotransferase type-1 domain; it reads YIMLKDAYTS…VKSALDKKLK (244 aa). Glycine 359 serves as a coordination point for L-glutamine. Catalysis depends on cysteine 386, which acts as the Nucleophile; for glutamine hydrolysis. Residues 387–390, glutamate 410, and arginine 467 each bind L-glutamine; that span reads LGMQ. Catalysis depends on residues histidine 514 and glutamate 516.

Belongs to the CTP synthase family. As to quaternary structure, homotetramer.

The enzyme catalyses UTP + L-glutamine + ATP + H2O = CTP + L-glutamate + ADP + phosphate + 2 H(+). It carries out the reaction L-glutamine + H2O = L-glutamate + NH4(+). It catalyses the reaction UTP + NH4(+) + ATP = CTP + ADP + phosphate + 2 H(+). The protein operates within pyrimidine metabolism; CTP biosynthesis via de novo pathway; CTP from UDP: step 2/2. Allosterically activated by GTP, when glutamine is the substrate; GTP has no effect on the reaction when ammonia is the substrate. The allosteric effector GTP functions by stabilizing the protein conformation that binds the tetrahedral intermediate(s) formed during glutamine hydrolysis. Inhibited by the product CTP, via allosteric rather than competitive inhibition. Catalyzes the ATP-dependent amination of UTP to CTP with either L-glutamine or ammonia as the source of nitrogen. Regulates intracellular CTP levels through interactions with the four ribonucleotide triphosphates. This chain is CTP synthase, found in Methanococcus aeolicus (strain ATCC BAA-1280 / DSM 17508 / OCM 812 / Nankai-3).